Consider the following 237-residue polypeptide: Purine nucleoside phosphorylase DeoD-type (237 aa).

H5 lines the a purine D-ribonucleoside pocket. Residues G21, R25, R44, and 88 to 91 contribute to the phosphate site; that span reads RVGS. Residues 180 to 182 and 204 to 205 each bind a purine D-ribonucleoside; these read EME and SD. Catalysis depends on D205, which acts as the Proton donor.

Belongs to the PNP/UDP phosphorylase family. As to quaternary structure, homohexamer; trimer of homodimers.

The enzyme catalyses a purine D-ribonucleoside + phosphate = a purine nucleobase + alpha-D-ribose 1-phosphate. It carries out the reaction a purine 2'-deoxy-D-ribonucleoside + phosphate = a purine nucleobase + 2-deoxy-alpha-D-ribose 1-phosphate. In terms of biological role, catalyzes the reversible phosphorolytic breakdown of the N-glycosidic bond in the beta-(deoxy)ribonucleoside molecules, with the formation of the corresponding free purine bases and pentose-1-phosphate. This Edwardsiella ictaluri (strain 93-146) protein is Purine nucleoside phosphorylase DeoD-type.